The sequence spans 373 residues: Ubiquitin carboxyl-terminal hydrolase 50 (373 aa).

One can recognise a USP domain in the interval 44–364; sequence TGLRNLGNTC…TAYLLFYSCQ (321 aa). Cys-53 acts as the Nucleophile in catalysis. His-322 acts as the Proton acceptor in catalysis.

The protein belongs to the peptidase C19 family.

It is found in the cytoplasm. The protein localises to the cytoskeleton. The protein resides in the microtubule organizing center. It localises to the centrosome. Its subcellular location is the nucleus. It carries out the reaction Thiol-dependent hydrolysis of ester, thioester, amide, peptide and isopeptide bonds formed by the C-terminal Gly of ubiquitin (a 76-residue protein attached to proteins as an intracellular targeting signal).. Functionally, deubiquitinating enzyme that removes conjugated ubiquitin from specific proteins to regulate different cellular processes. Regulates the inflammasome signaling pathway by deubiquitinating 'Lys-63'-linked polyubiquitination of the PYCARD/ASC adapter protein. Regulates the ubiquitination and stability of the ACE2 protein. Acts as a negative regulator of the G2/M checkpoint pathway, by preventing serine/threonine kinase WEE1 degradation, thereby repressing entry into mitosis following activation of the G2/M DNA damage checkpoint. In Macaca fascicularis (Crab-eating macaque), this protein is Ubiquitin carboxyl-terminal hydrolase 50 (USP50).